A 249-amino-acid chain; its full sequence is Ribonuclease 3 (249 aa).

In terms of domain architecture, RNase III spans 20–149; it reads FKEFQERISV…FIGALYLDQG (130 aa). Mg(2+) is bound at residue glutamate 62. Aspartate 66 is a catalytic residue. The Mg(2+) site is built by aspartate 135 and glutamate 138. Residue glutamate 138 is part of the active site. The DRBM domain maps to 175–244; sequence DFKSQLQEFV…AQEALAKMQK (70 aa). Residues 223–249 form a disordered region; it reads NGRSKKEAEQHAAQEALAKMQKHHTKQ.

Belongs to the ribonuclease III family. As to quaternary structure, homodimer. The cofactor is Mg(2+).

Its subcellular location is the cytoplasm. The enzyme catalyses Endonucleolytic cleavage to 5'-phosphomonoester.. Digests double-stranded RNA. Involved in the processing of primary rRNA transcript to yield the immediate precursors to the large and small rRNAs (23S and 16S). Processes some mRNAs, and tRNAs when they are encoded in the rRNA operon. Processes pre-crRNA and tracrRNA of type II CRISPR loci if present in the organism. The polypeptide is Ribonuclease 3 (Bacillus velezensis (strain DSM 23117 / BGSC 10A6 / LMG 26770 / FZB42) (Bacillus amyloliquefaciens subsp. plantarum)).